We begin with the raw amino-acid sequence, 124 residues long: S-adenosylmethionine decarboxylase proenzyme (124 aa).

Serine 63 acts as the Schiff-base intermediate with substrate; via pyruvic acid in catalysis. Serine 63 is subject to Pyruvic acid (Ser); by autocatalysis. Catalysis depends on histidine 68, which acts as the Proton acceptor; for processing activity. Cysteine 83 serves as the catalytic Proton donor; for catalytic activity.

It belongs to the prokaryotic AdoMetDC family. Type 1 subfamily. As to quaternary structure, heterotetramer of two alpha and two beta chains arranged as a dimer of alpha/beta heterodimers. Pyruvate is required as a cofactor. Post-translationally, is synthesized initially as an inactive proenzyme. Formation of the active enzyme involves a self-maturation process in which the active site pyruvoyl group is generated from an internal serine residue via an autocatalytic post-translational modification. Two non-identical subunits are generated from the proenzyme in this reaction, and the pyruvate is formed at the N-terminus of the alpha chain, which is derived from the carboxyl end of the proenzyme. The post-translation cleavage follows an unusual pathway, termed non-hydrolytic serinolysis, in which the side chain hydroxyl group of the serine supplies its oxygen atom to form the C-terminus of the beta chain, while the remainder of the serine residue undergoes an oxidative deamination to produce ammonia and the pyruvoyl group blocking the N-terminus of the alpha chain.

It carries out the reaction S-adenosyl-L-methionine + H(+) = S-adenosyl 3-(methylsulfanyl)propylamine + CO2. Its pathway is amine and polyamine biosynthesis; S-adenosylmethioninamine biosynthesis; S-adenosylmethioninamine from S-adenosyl-L-methionine: step 1/1. In terms of biological role, catalyzes the decarboxylation of S-adenosylmethionine to S-adenosylmethioninamine (dcAdoMet), the propylamine donor required for the synthesis of the polyamines spermine and spermidine from the diamine putrescine. This is S-adenosylmethionine decarboxylase proenzyme from Anoxybacillus flavithermus (strain DSM 21510 / WK1).